Consider the following 595-residue polypeptide: MGQCYGKVNQSKQNGEEEANTTTYVVSGDGNQIQPLTPVNYGRAKNTPARSSNPSPWPSPFPHGSASPLPSGVSPSPARTSTPRRFFRRPFPPPSPAKHIKASLIKRLGVKPKEGPIPEERGTEPEQSLDKSFGYGKNFGAKYELGKEVGRGHFGHTCSGRGKKGDIKDHPIAVKIISKAKMTTAIAIEDVRREVKLLKSLSGHKYLIKYYDACEDANNVYIVMELCDGGELLDRILARGGKYPEDDAKAIVVQILTVVSFCHLQGVVHRDLKPENFLFTSSREDSDLKLIDFGLSDFIRPDERLNDIVGSAYYVAPEVLHRSYSLEADIWSIGVITYILLCGSRPFWARTESGIFRTVLRTEPNYDDVPWPSCSSEGKDFVKRLLNKDYRKRMSAVQALTHPWLRDDSRVIPLDILIYKLVKAYLHATPLRRAALKALAKALTENELVYLRAQFMLLGPNKDGSVSLENFKTALMQNATDAMRESRVPEILHTMESLAYRKMYFEEFCAAAISIHQLEAVDAWEEIATAGFQHFETEGNRVITIEELARELNVGASAYGHLRDWVRSSDGKLSYLGFTKFLHGVTLRAAHARPR.

The interval 1–131 (MGQCYGKVNQ…GTEPEQSLDK (131 aa)) is disordered. A lipid anchor (N-myristoyl glycine) is attached at Gly2. Residues 20–37 (NTTTYVVSGDGNQIQPLT) are compositionally biased toward polar residues. Basic and acidic residues predominate over residues 111–124 (KPKEGPIPEERGTE). The Protein kinase domain maps to 143-405 (YELGKEVGRG…AVQALTHPWL (263 aa)). ATP is bound by residues 149-157 (VGRGHFGHT) and Lys175. The active-site Proton acceptor is Asp271. Ser311 is modified (phosphoserine). Phosphoserine; by CPK1 and CPK34 is present on Ser353. Residues 409–439 (SRVIPLDILIYKLVKAYLHATPLRRAALKAL) are autoinhibitory domain. The interval 428-448 (ATPLRRAALKALAKALTENEL) is calmodulin binding (CaMBD). EF-hand domains are found at residues 446–482 (NELV…ATDA), 483–518 (MRES…IHQL), 519–558 (EAVD…GASA), and 559–588 (YGHL…VTLR). Asn461, Asp463, Ser465, Lys502, Glu507, Asn540, Glu547, Ser568, Asp570, and Lys572 together coordinate Ca(2+). Ser574 carries the post-translational modification Phosphoserine.

It belongs to the protein kinase superfamily. Ser/Thr protein kinase family. CDPK subfamily. As to quaternary structure, binds calmodulin (CaM) in a calcium-dependent manner. Interacts with GLN1-1. Autophosphorylated. As to expression, ubiquitously expressed with higher levels in siliques and roots, especially at the root cap. Particularly present in vascular bundles of stems and leaves.

The protein localises to the cytoplasm. It is found in the membrane. It catalyses the reaction L-seryl-[protein] + ATP = O-phospho-L-seryl-[protein] + ADP + H(+). The catalysed reaction is L-threonyl-[protein] + ATP = O-phospho-L-threonyl-[protein] + ADP + H(+). With respect to regulation, not activated by calcium. Autophosphorylation may play an important role in the regulation of the kinase activity. Stimulated by magnesium ions (optimum at 10-15 mM) and manganese ions. May play a role in signal transduction pathways that involve calcium as a second messenger. Serine/threonine kinase that phosphorylates histone H3 an GLN1-1. This Arabidopsis thaliana (Mouse-ear cress) protein is CDPK-related kinase 3 (CRK3).